Reading from the N-terminus, the 505-residue chain is OVARIAN TUMOR DOMAIN-containing deubiquitinating enzyme 6 (505 aa).

Residues 1-191 are disordered; the sequence is MTRILVQRGS…NSSDEHMPCY (191 aa). The segment covering 9–30 has biased composition (low complexity); the sequence is GSSGSSSNSSRPSSSSSSSSGS. Residues 51-72 show a composition bias toward basic and acidic residues; that stretch reads DEKQEEVTVVEKAECSDAKDVA. A compositionally biased stretch (acidic residues) spans 73–86; it reads VDSDEPADREDDEG. Positions 115 to 124 are enriched in pro residues; that stretch reads PPVPAPPPKP. Residues 159 to 173 are compositionally biased toward low complexity; sequence SSRSSPTGSHPSSPR. The segment covering 174 to 188 has biased composition (basic and acidic residues); it reads SHSENEGYNSSDEHM. Residues 216 to 339 enclose the OTU domain; sequence FEIRRMLEDG…GNHYNSLVDP (124 aa). D224 is an active-site residue. C227 acts as the Nucleophile in catalysis. H332 is a catalytic residue. The tract at residues 416–447 is disordered; that stretch reads RIGPKESSTSNAETSSSGARPSGSDSKPAEAV. Residues 421–441 are compositionally biased toward low complexity; it reads ESSTSNAETSSSGARPSGSDS. The region spanning 446-491 is the UBA domain; it reads AVKEKTVLSSSIEMVLSMGFSYAQAMEAYSIFGDDVDSMVCYVLET.

Belongs to the peptidase C85 family. In terms of assembly, interacts with KDM1C. In terms of tissue distribution, mostly expressed in stems flowers and siliques, and, to a lower extent, in leaves, roots and seedlings.

The protein localises to the nucleus. The protein resides in the cytoplasm. It carries out the reaction Thiol-dependent hydrolysis of ester, thioester, amide, peptide and isopeptide bonds formed by the C-terminal Gly of ubiquitin (a 76-residue protein attached to proteins as an intracellular targeting signal).. Its function is as follows. Hydrolase that can remove conjugated ubiquitin from proteins in vitro and may therefore play an important regulatory role at the level of protein turnover by preventing degradation. Binds chromatin (e.g. nucleosomes and histones) and has enzymatic histone deubiquitinase activity, specific for the H2B histone. Can both repress (e.g. OSR2) and promote (e.g. AN3) the expression of target genes by associating with chromatin, deubiquitinating H2B and regulating its euchromatic histone marks (e.g. H3ac and H3K4me). In association with LDL1/KDM1C, involved in transcriptional gene repression via histone deubiquitination and demethylation. Promotes the concerted epigenetic regulation and repression (e.g. the removal of euchromatic histone acetylation, ubiquitination, and methylation marks) of a set of genes (e.g. GA20OX, WUS, OSR2, ARL and ABI5) that collectively limit plant growth thus stimulating plant growth and increasing cell size. This chain is OVARIAN TUMOR DOMAIN-containing deubiquitinating enzyme 6, found in Arabidopsis thaliana (Mouse-ear cress).